Here is a 179-residue protein sequence, read N- to C-terminus: Large ribosomal subunit protein uL6 (179 aa).

Residues 151–179 are disordered; that stretch reads RKPEPYKGKGIKYDNEQIRRKAGKSGGKK. Positions 152 to 169 are enriched in basic and acidic residues; it reads KPEPYKGKGIKYDNEQIR. Positions 170 to 179 are enriched in basic residues; that stretch reads RKAGKSGGKK.

This sequence belongs to the universal ribosomal protein uL6 family. As to quaternary structure, part of the 50S ribosomal subunit.

Functionally, this protein binds to the 23S rRNA, and is important in its secondary structure. It is located near the subunit interface in the base of the L7/L12 stalk, and near the tRNA binding site of the peptidyltransferase center. In Nitratidesulfovibrio vulgaris (strain ATCC 29579 / DSM 644 / CCUG 34227 / NCIMB 8303 / VKM B-1760 / Hildenborough) (Desulfovibrio vulgaris), this protein is Large ribosomal subunit protein uL6.